A 154-amino-acid chain; its full sequence is Endoribonuclease YbeY (154 aa).

Residues histidine 113, histidine 117, and histidine 123 each contribute to the Zn(2+) site.

It belongs to the endoribonuclease YbeY family. Requires Zn(2+) as cofactor.

It localises to the cytoplasm. Functionally, single strand-specific metallo-endoribonuclease involved in late-stage 70S ribosome quality control and in maturation of the 3' terminus of the 16S rRNA. This is Endoribonuclease YbeY from Anaplasma marginale (strain Florida).